Consider the following 486-residue polypeptide: Histamine H1 receptor (486 aa).

Over methionine 1–proline 29 the chain is Extracellular. 2 N-linked (GlcNAc...) asparagine glycosylation sites follow: asparagine 5 and asparagine 18. Residues leucine 30–tyrosine 50 form a helical membrane-spanning segment. Over alanine 51–leucine 64 the chain is Cytoplasmic. Residues tyrosine 65–isoleucine 89 form a helical membrane-spanning segment. Topologically, residues methionine 90 to arginine 97 are extracellular. A helical transmembrane segment spans residues proline 98 to isoleucine 123. Cysteine 100 and cysteine 180 are joined by a disulfide. Positions 107 and 112 each coordinate histamine. The segment at aspartate 107–threonine 112 is important for agonist binding. Residues aspartate 124–alanine 144 are Cytoplasmic-facing. A phosphothreonine mark is found at threonine 140 and threonine 142. A helical membrane pass occupies residues serine 145–glycine 164. Topologically, residues tryptophan 165–threonine 188 are extracellular. A helical transmembrane segment spans residues tryptophan 189–valine 211. Asparagine 198 contributes to the histamine binding site. At lysine 212–glutamine 415 the chain is on the cytoplasmic side. Serine 230 bears the Phosphoserine mark. A compositionally biased stretch (basic and acidic residues) spans serine 241–arginine 253. 2 disordered regions span residues serine 241–glutamate 295 and valine 310–serine 379. 2 positions are modified to phosphoserine: serine 342 and serine 345. The segment covering aspartate 347–serine 365 has biased composition (polar residues). 4 positions are modified to phosphoserine: serine 379, serine 381, serine 395, and serine 397. Residues leucine 416–phenylalanine 439 form a helical membrane-spanning segment. Residues phenylalanine 423–tryptophan 427 form an important for agonist binding region. Tyrosine 430 serves as a coordination point for histamine. Cysteines 440 and 443 form a disulfide. Over cysteine 440 to serine 445 the chain is Extracellular. The helical transmembrane segment at glutamate 446–proline 468 threads the bilayer. The Cytoplasmic segment spans residues leucine 469–serine 486.

Belongs to the G-protein coupled receptor 1 family. Phosphorylation at sites in the second and third cytoplasmic loops independently contribute to agonist-induced receptor down-regulation.

It localises to the cell membrane. Its function is as follows. G-protein-coupled receptor for histamine, a biogenic amine that functions as an immune modulator and a neurotransmitter. Through the H1 receptor, histamine mediates the contraction of smooth muscles and increases capillary permeability due to contraction of terminal venules. Also mediates neurotransmission in the central nervous system and thereby regulates circadian rhythms, emotional and locomotor activities as well as cognitive functions. The protein is Histamine H1 receptor of Rattus norvegicus (Rat).